The following is a 315-amino-acid chain: Acyl transferase (315 aa).

Catalysis depends on charge relay system residues Ser-116, Asp-213, and His-243.

It belongs to the LuxD family.

Its pathway is lipid metabolism; fatty acid reduction for biolumincescence. Acyl transferase is part of the fatty acid reductase system required for aldehyde biosynthesis; it produces fatty acids for the luminescent reaction. The protein is Acyl transferase of Photobacterium leiognathi.